A 1307-amino-acid polypeptide reads, in one-letter code: TBC1 domain family member 4 (1307 aa).

Met1 carries the N-acetylmethionine modification. Positions Met1–Lys30 are disordered. The span at Pro13–Pro23 shows a compositional bias: pro residues. The 157-residue stretch at Pro53–Arg209 folds into the PID 1 domain. Residues Leu237 to Asp246 show a composition bias toward basic and acidic residues. Residues Leu237 to Ser276 form a disordered region. A phosphoserine mark is found at Ser258, Ser261, and Ser320. Residues Arg319–Ile475 form the PID 2 domain. Phosphoserine; by PKB/AKT1 occurs at positions 324 and 348. A disordered region spans residues Gln330–Lys360. Phosphoserine is present on Ser351. Residue Lys484 is modified to N6-acetyllysine. Ser573 carries the phosphoserine modification. Residue Thr575 is modified to Phosphothreonine. A Phosphoserine; by PKB/AKT1 modification is found at Ser577. Arg584 carries the post-translational modification Omega-N-methylarginine. Ser595 carries the post-translational modification Phosphoserine; by PKB/AKT1. 2 positions are modified to phosphoserine: Ser598 and Ser616. Disordered regions lie at residues Asn603–Cys684 and Ser732–Pro774. The segment covering Asp615–Ser624 has biased composition (pro residues). Thr620 is modified (phosphothreonine). Residue Ser624 is modified to Phosphoserine. Position 649 is a phosphothreonine; by PKB/AKT1 (Thr649). Ser673 is modified (phosphoserine). Over residues Ser757–Ala767 the composition is skewed to polar residues. Phosphoserine; by PKB/AKT1 is present on Ser758. Phosphoserine occurs at positions 761 and 764. The residue at position 770 (Thr770) is a Phosphothreonine. Positions Gly927–Gly1121 constitute a Rab-GAP TBC domain.

Phosphorylated by AKT1; insulin-induced. Also phosphorylated by AMPK in response to insulin. Insulin-stimulated phosphorylation is required for SLC2A4/GLUT4 translocation. Has no effect on SLC2A4/GLUT4 internalization. As to expression, widely expressed, including in pancreatic beta cells.

The protein localises to the cytoplasm. Its function is as follows. May act as a GTPase-activating protein for RAB2A, RAB8A, RAB10 and RAB14. Promotes insulin-induced glucose transporter SLC2A4/GLUT4 translocation at the plasma membrane, thus increasing glucose uptake. This Mus musculus (Mouse) protein is TBC1 domain family member 4 (Tbc1d4).